Consider the following 823-residue polypeptide: Leucine--tRNA ligase (823 aa).

The short motif at 42-52 (PYPSGTLHMGH) is the 'HIGH' region element. Positions 575 to 579 (KMSKS) match the 'KMSKS' region motif. K578 lines the ATP pocket.

Belongs to the class-I aminoacyl-tRNA synthetase family.

The protein resides in the cytoplasm. The enzyme catalyses tRNA(Leu) + L-leucine + ATP = L-leucyl-tRNA(Leu) + AMP + diphosphate. The sequence is that of Leucine--tRNA ligase from Legionella pneumophila (strain Lens).